Here is a 259-residue protein sequence, read N- to C-terminus: Probable iron export permease protein FetB (259 aa).

Over 1–5 (MNSHN) the chain is Periplasmic. A helical transmembrane segment spans residues 6 to 26 (ITNESLALALMLVVVAILISH). Over 27 to 35 (KEKLALEKD) the chain is Cytoplasmic. The next 2 helical transmembrane spans lie at 36-56 (ILWSVGRAIIQLIIVGYVLKY) and 57-77 (IFSVDDASLTLLMVLFICFNA). Topologically, residues 78-91 (AWNAQKRSKYIAKA) are cytoplasmic. A helical membrane pass occupies residues 92 to 112 (FISSFIAITVGAGITLAVLIL). Residues 113-117 (SGSIE) are Periplasmic-facing. A helical transmembrane segment spans residues 118 to 138 (FIPMQVIPIAGMIAGNAMVAV). Over 139-191 (GLCYNNLGQRVISEQQQIQEKLSLGATPKQASAILIRDSIRAALIPTVDSAKT) the chain is Cytoplasmic. Residues 192-212 (VGLVSLPGMMSGLIFAGIDPV) form a helical membrane-spanning segment. The Periplasmic segment spans residues 213–218 (KAIKYQ). A helical membrane pass occupies residues 219–239 (IMVTFMLLSTASLSTIIACYL). Topologically, residues 240–259 (TYRKFYNSRHQLVVTQLKKK) are cytoplasmic.

The protein belongs to the UPF0014 family. In terms of assembly, the complex is composed of two ATP-binding proteins (FetA) and two transmembrane proteins (FetB).

Its subcellular location is the cell inner membrane. Its function is as follows. Part of the ABC transporter complex FetAB, which is probably involved in iron export and enhances resistance to H(2)O(2)-mediated oxidative stress. Probably responsible for the translocation of the substrate across the membrane. The polypeptide is Probable iron export permease protein FetB (fetB) (Escherichia coli (strain K12)).